A 92-amino-acid chain; its full sequence is Precursor of CEP12 (92 aa).

The N-terminal stretch at 1-30 is a signal peptide; it reads MVNRDNSIVALSFFMLFLLVLHLHFETTTA. The propeptide occupies 31 to 70; that stretch reads ARKPVRVFGPPSSIEWSPPSPPKDDFEWFEINIYKNIEQT. The segment at 70 to 92 is disordered; sequence TAFRPTGQGPSQGIGHKDPPGAP. Hydroxyproline occurs at positions 74 and 79. The propeptide occupies 86–92; sequence KDPPGAP.

The protein belongs to the C-terminally encoded plant signaling peptide (CEP) family. As to quaternary structure, interacts with CEP receptors (e.g. CEPR1 and CEPR2). The mature small signaling peptide is generated by proteolytic processing of the longer precursor.

The protein localises to the secreted. The protein resides in the extracellular space. Its subcellular location is the apoplast. Extracellular signaling peptide that may regulate primary root growth rate and systemic nitrogen (N)-demand signaling. This chain is Precursor of CEP12, found in Arabidopsis thaliana (Mouse-ear cress).